Consider the following 51-residue polypeptide: uncharacterized protein (51 aa).

This is an uncharacterized protein from Treponema pallidum (strain Nichols).